Reading from the N-terminus, the 268-residue chain is Undecaprenyl-diphosphatase (268 aa).

Transmembrane regions (helical) follow at residues 4-24, 50-70, 84-104, 109-129, 144-164, 184-204, 214-234, and 245-265; these read STTL…FIPV, IQLG…ISVI, AAVL…HGFI, FETP…LLFV, VPLG…VPGV, AAEF…AFDL, GALG…VLVV, and GYSL…AALL.

Belongs to the UppP family.

It is found in the cell inner membrane. The enzyme catalyses di-trans,octa-cis-undecaprenyl diphosphate + H2O = di-trans,octa-cis-undecaprenyl phosphate + phosphate + H(+). In terms of biological role, catalyzes the dephosphorylation of undecaprenyl diphosphate (UPP). Confers resistance to bacitracin. This chain is Undecaprenyl-diphosphatase, found in Cereibacter sphaeroides (strain ATCC 17025 / ATH 2.4.3) (Rhodobacter sphaeroides).